The following is a 392-amino-acid chain: GTPase Obg (392 aa).

Positions 1-159 (MKFVDEATIL…RDLQLELMLL (159 aa)) constitute an Obg domain. The segment at 127–146 (NTRFKSSVNRTPRQKTMGTP) is disordered. Residues 129 to 143 (RFKSSVNRTPRQKTM) show a composition bias toward polar residues. The OBG-type G domain occupies 160–333 (ADVGMLGLPN…LCWDVMAFIK (174 aa)). GTP is bound by residues 166–173 (GLPNAGKS), 191–195 (FTTLV), 213–216 (DIPG), 283–286 (NKVD), and 314–316 (SAA). The Mg(2+) site is built by Ser-173 and Thr-193. The segment at 360 to 392 (QLEEAQPEVEEDDDWDDDWDEDDEEGVETIYQR) is disordered. A compositionally biased stretch (acidic residues) spans 364 to 386 (AQPEVEEDDDWDDDWDEDDEEGV).

Belongs to the TRAFAC class OBG-HflX-like GTPase superfamily. OBG GTPase family. Monomer. Requires Mg(2+) as cofactor.

The protein localises to the cytoplasm. Functionally, an essential GTPase which binds GTP, GDP and possibly (p)ppGpp with moderate affinity, with high nucleotide exchange rates and a fairly low GTP hydrolysis rate. Plays a role in control of the cell cycle, stress response, ribosome biogenesis and in those bacteria that undergo differentiation, in morphogenesis control. The chain is GTPase Obg from Erwinia tasmaniensis (strain DSM 17950 / CFBP 7177 / CIP 109463 / NCPPB 4357 / Et1/99).